Reading from the N-terminus, the 307-residue chain is Putative ankyrin repeat protein R229 (307 aa).

6 ANK repeats span residues 135–164 (ASRV…DINV), 165–194 (DNDK…NVHA), 196–224 (DDEA…NVNA), 226–254 (NDYA…NPMA), 256–284 (RYYP…SMVY), and 286–307 (SYAM…LLLD).

This is Putative ankyrin repeat protein R229 from Acanthamoeba polyphaga (Amoeba).